The chain runs to 137 residues: Phospholipase A2 group V (137 aa).

The N-terminal stretch at 1-20 is a signal peptide; sequence MKGLLTLAWFLACSVPAVPG. 6 disulfides stabilise this stretch: Cys46–Cys137, Cys48–Cys64, Cys63–Cys117, Cys70–Cys110, Cys79–Cys103, and Cys97–Cys108. Ca(2+)-binding residues include Tyr47, Gly49, and Gly51. His67 is a catalytic residue. Ca(2+) is bound at residue Asp68. Asp111 is an active-site residue.

The protein belongs to the phospholipase A2 family. The cofactor is Ca(2+). This enzyme lacks one of the seven disulfide bonds found in similar PA2 proteins. As to expression, expressed in peritoneal macrophages (at protein level). Expressed in heart, skeletal muscle and white adipose tissue.

It is found in the secreted. The protein resides in the cell membrane. It localises to the cytoplasmic vesicle. The protein localises to the phagosome. Its subcellular location is the recycling endosome. It is found in the golgi apparatus. The protein resides in the cis-Golgi network. It localises to the trans-Golgi network. It catalyses the reaction a 1,2-diacyl-sn-glycero-3-phosphocholine + H2O = a 1-acyl-sn-glycero-3-phosphocholine + a fatty acid + H(+). The catalysed reaction is 1-hexadecanoyl-2-(9Z-octadecenoyl)-sn-glycero-3-phosphocholine + H2O = 1-hexadecanoyl-sn-glycero-3-phosphocholine + (9Z)-octadecenoate + H(+). It carries out the reaction 1-hexadecanoyl-2-(5Z,8Z,11Z,14Z-eicosatetraenoyl)-sn-glycero-3-phosphocholine + H2O = 1-hexadecanoyl-sn-glycero-3-phosphocholine + (5Z,8Z,11Z,14Z)-eicosatetraenoate + H(+). The enzyme catalyses 1-hexadecanoyl-2-(9Z,12Z-octadecadienoyl)-sn-glycero-3-phosphoethanolamine + H2O = 1-hexadecanoyl-sn-glycero-3-phosphoethanolamine + (9Z,12Z)-octadecadienoate + H(+). It catalyses the reaction 1-hexadecanoyl-2-(5Z,8Z,11Z,14Z-eicosatetraenoyl)-sn-glycero-3-phosphoethanolamine + H2O = 1-hexadecanoyl-sn-glycero-3-phosphoethanolamine + (5Z,8Z,11Z,14Z)-eicosatetraenoate + H(+). The catalysed reaction is 1-octadecanoyl-2-(5Z,8Z,11Z,14Z-eicosatetraenoyl)-sn-glycero-3-phospho-(1D-myo-inositol) + H2O = 1-octadecanoyl-sn-glycero-3-phospho-(1D-myo-inositol) + (5Z,8Z,11Z,14Z)-eicosatetraenoate + H(+). It carries out the reaction 1-hexadecanoyl-2-(9Z-octadecenoyl)-sn-glycero-3-phosphoglycerol + H2O = 1-hexadecanoyl-sn-glycero-3-phosphoglycerol + (9Z)-octadecenoate + H(+). The enzyme catalyses N-hexadecanoyl-1,2-di-(9Z-octadecenoyl)-sn-glycero-3-phosphoethanolamine + H2O = N-hexadecanoyl-1-(9Z-octadecenoyl)-sn-glycero-3-phosphoethanolamine + (9Z)-octadecenoate + H(+). It catalyses the reaction 1'-[1,2-di-(9Z-octadecenoyl)-sn-glycero-3-phospho]-3'-[1-(9Z-octadecenoyl)-sn-glycero-3-phospho]-glycerol + H2O = 1',3'-bis-[1-(9Z-octadecenoyl)-sn-glycero-3-phospho]-glycerol + (9Z)-octadecenoate + H(+). The catalysed reaction is 1',3'-bis[1,2-di-(9Z-octadecenoyl)-sn-glycero-3-phospho]-glycerol + H2O = 1'-[1,2-di-(9Z-octadecenoyl)-sn-glycero-3-phospho]-3'-[1-(9Z-octadecenoyl)-sn-glycero-3-phospho]-glycerol + (9Z)-octadecenoate + H(+). Its pathway is lipid metabolism; phospholipid metabolism. It functions in the pathway lipid metabolism; leukotriene B4 biosynthesis. The protein operates within lipid metabolism; leukotriene C4 biosynthesis. In terms of biological role, secretory calcium-dependent phospholipase A2 that primarily targets extracellular phospholipids. Hydrolyzes the ester bond of the fatty acyl group attached at sn-2 position of phospholipids (phospholipase A2 activity), preferentially releasing fatty acyl groups with a low degree of unsaturation such as oleoyl (C18:1) and linoleoyl (C18:2) groups. Hydrolyzes low-density lipoprotein (LDL) phospholipids releasing unsaturated fatty acids that drive macrophage polarization toward an M2 phenotype. May act in an autocrine and paracrine manner. Contributes to lipid remodeling of cellular membranes at different subcellular locations and generation of lipid mediators involved in pathogen clearance. Cleaves sn-2 fatty acyl chains of cardiolipin, a major component of the inner membrane of mitochondria and bacterial membranes. Promotes phagocytosis of bacteria in macrophages through production of lysophosphatidylethanolamines. Displays bactericidal activity against Gram-positive bacteria by directly hydrolyzing the phospholipids of the bacterial membrane. Promotes phagocytosis and killing of ingested fungi likely through controlling phagosome-lysosome fusion and phagosome maturation. Plays a role in biosynthesis of cysteinyl leukotrienes (CysLTs) in myeloid cells. In eosinophils, triggers perinuclear arachidonate release and LTC4 synthesis in a PLA2G4A-independent way. In neutrophils, amplifies CysLTs biosynthesis initiated by PLA2G4A. Promotes immune complex clearance in macrophages via stimulating synthesis of CysLTs, which act through CYSLTR1 to trigger phagocytosis. May regulate antigen processing in antigen-presenting cells. In pulmonary macrophages regulates IL33 production required for activation of group 2 innate lymphoid cells. May play a role in the biosynthesis of N-acyl ethanolamines that regulate energy metabolism. Hydrolyzes N-acyl phosphatidylethanolamines to N-acyl lysophosphatidylethanolamines, which are further cleaved by a lysophospholipase D to release N-acyl ethanolamines. The sequence is that of Phospholipase A2 group V (Pla2g5) from Mus musculus (Mouse).